The primary structure comprises 422 residues: L-2-hydroxyglutarate dehydrogenase (422 aa).

This sequence belongs to the L2HGDH family. FAD serves as cofactor.

It is found in the cell inner membrane. It catalyses the reaction (S)-2-hydroxyglutarate + a quinone = a quinol + 2-oxoglutarate. Its pathway is amino-acid degradation. Catalyzes the dehydrogenation of L-2-hydroxyglutarate (L2HG) to alpha-ketoglutarate and couples to the respiratory chain by feeding electrons from the reaction into the membrane quinone pool. Functions in a L-lysine degradation pathway that proceeds via cadaverine, glutarate and L-2-hydroxyglutarate. The polypeptide is L-2-hydroxyglutarate dehydrogenase (Escherichia coli (strain K12)).